We begin with the raw amino-acid sequence, 391 residues long: Elongation factor Tu (391 aa).

Residues 10–201 (KPHVNIGTIG…EVDKYIPTPE (192 aa)) enclose the tr-type G domain. Positions 19 to 26 (GHVDHGKT) are G1. 19–26 (GHVDHGKT) contacts GTP. T26 provides a ligand contact to Mg(2+). The tract at residues 55-59 (GITIS) is G2. The tract at residues 76 to 79 (DCPG) is G3. GTP is bound by residues 76–80 (DCPGH) and 131–134 (NKVD). A G4 region spans residues 131-134 (NKVD). A G5 region spans residues 169-171 (SAL).

This sequence belongs to the TRAFAC class translation factor GTPase superfamily. Classic translation factor GTPase family. EF-Tu/EF-1A subfamily. In terms of assembly, monomer.

The protein localises to the cytoplasm. The enzyme catalyses GTP + H2O = GDP + phosphate + H(+). Its function is as follows. GTP hydrolase that promotes the GTP-dependent binding of aminoacyl-tRNA to the A-site of ribosomes during protein biosynthesis. The chain is Elongation factor Tu from Chelativorans sp. (strain BNC1).